We begin with the raw amino-acid sequence, 39 residues long: Protein disulfide-isomerase A3 (39 aa).

Belongs to the protein disulfide isomerase family. In terms of assembly, part of the major histocompatibility complex class I (MHC I) peptide loading complex composed of TAP1, TAP2, B2M, MHC heavy chain, TAPBP, PDIA3, and CALR. Interacts with ERP27 and CANX. Interacts with SERPINA2 and with SERPINA1. Interacts with ATP2A2. Post-translationally, within the major histocompatibility complex class I (MHC I) peptide loading complex forms reversible disulfide-linked heterodimers with TAPBP as part of its protein folding chaperone activity. This is essential to assist the dynamic assembly of the MHC I complex with high affinity antigens in the endoplasmic reticulum. In terms of processing, phosphorylated. As to expression, predominantly expressed in liver. Low in brain, testis and colon. Not detectable in pancreas and skeletal muscle.

It localises to the endoplasmic reticulum. Its subcellular location is the endoplasmic reticulum lumen. It is found in the melanosome. The catalysed reaction is Catalyzes the rearrangement of -S-S- bonds in proteins.. Functionally, protein disulfide isomerase that catalyzes the formation, isomerization, and reduction or oxidation of disulfide bonds in client proteins and functions as a protein folding chaperone. Core component of the major histocompatibility complex class I (MHC I) peptide loading complex where it functions as an essential folding chaperone for TAPBP. Through TAPBP, assists the dynamic assembly of the MHC I complex with high affinity antigens in the endoplasmic reticulum. Therefore, plays a crucial role in the presentation of antigens to cytotoxic T cells in adaptive immunity. This Papio hamadryas (Hamadryas baboon) protein is Protein disulfide-isomerase A3 (PDIA3).